A 392-amino-acid polypeptide reads, in one-letter code: Formate-dependent phosphoribosylglycinamide formyltransferase (392 aa).

N(1)-(5-phospho-beta-D-ribosyl)glycinamide-binding positions include 22 to 23 (EL) and glutamate 82. ATP is bound by residues arginine 114, lysine 155, 160–165 (SSGKGQ), 195–198 (EGVV), and glutamate 203. An ATP-grasp domain is found at 119–308 (RLAAEELGLP…EFALHVRAFL (190 aa)). Mg(2+) contacts are provided by glutamate 267 and glutamate 279. N(1)-(5-phospho-beta-D-ribosyl)glycinamide contacts are provided by residues aspartate 286, lysine 355, and 362–363 (RR).

Belongs to the PurK/PurT family. Homodimer.

It catalyses the reaction N(1)-(5-phospho-beta-D-ribosyl)glycinamide + formate + ATP = N(2)-formyl-N(1)-(5-phospho-beta-D-ribosyl)glycinamide + ADP + phosphate + H(+). Its pathway is purine metabolism; IMP biosynthesis via de novo pathway; N(2)-formyl-N(1)-(5-phospho-D-ribosyl)glycinamide from N(1)-(5-phospho-D-ribosyl)glycinamide (formate route): step 1/1. Its function is as follows. Involved in the de novo purine biosynthesis. Catalyzes the transfer of formate to 5-phospho-ribosyl-glycinamide (GAR), producing 5-phospho-ribosyl-N-formylglycinamide (FGAR). Formate is provided by PurU via hydrolysis of 10-formyl-tetrahydrofolate. The sequence is that of Formate-dependent phosphoribosylglycinamide formyltransferase from Salmonella paratyphi B (strain ATCC BAA-1250 / SPB7).